The chain runs to 517 residues: Cytochrome P450 monooxygenase sdnE (517 aa).

A helical transmembrane segment spans residues 4–24 (SSILQTLAVLYVLYLLGLIIY). Residue asparagine 111 is glycosylated (N-linked (GlcNAc...) asparagine). The chain crosses the membrane as a helical span at residues 219 to 239 (FPVVFIILGLSPRAMLKLVVP). Cysteine 456 serves as a coordination point for heme.

It belongs to the cytochrome P450 family. Heme serves as cofactor.

The protein resides in the membrane. The protein operates within antibiotic biosynthesis. In terms of biological role, cytochrome P450 monooxygenase; part of the gene cluster that mediates the biosynthesis of sordarin and hypoxysordarin, glycoside antibiotics with a unique tetracyclic diterpene aglycone structure. First, the geranylgeranyl diphosphate synthase sdnC constructs GGDP from farnesyl diphosphate and isopentenyl diphosphate. The diterpene cyclase sdnA then catalyzes the cyclization of GGDP to afford cycloaraneosene. Cycloaraneosene is then hydroxylated four times by the putative cytochrome P450 monooxygenases sdnB, sdnE, sdnF and sdnH to give a hydroxylated cycloaraneosene derivative such as cycloaraneosene-8,9,13,19-tetraol. Although the order of the hydroxylations is unclear, at least C8, C9 and C13 of the cycloaraneosene skeleton are hydroxylated before the sordaricin formation. Dehydration of the 13-hydroxy group of the hydroxylated cycloaraneosene derivative might be catalyzed by an unassigned hypothetical protein such as sdnG and sdnP to construct the cyclopentadiene moiety. The FAD-dependent oxidoreductase sdnN is proposed to catalyze the oxidation at C9 of the hydroxylated cycloaraneosene derivative and also catalyze the Baeyer-Villiger oxidation to give the lactone intermediate. The presumed lactone intermediate would be hydrolyzed to give an acrolein moiety and a carboxylate moiety. Then, [4+2]cycloaddition would occur between the acrolein moiety and the cyclopentadiene moiety to give sordaricin. SdnN might also be involved in the [4+2]cycloaddition after the hypothesized oxidation to accommodate the oxidized product and prompt the [4+2]cycloaddition. GDP-6-deoxy-D-altrose may be biosynthesized from GDP-D-mannose by the putative GDP-mannose-4,6-dehydratase sdnI and the short-chain dehydrogenase sdnK. The glycosyltransferase sdnJ catalyzes the attachment of 6-deoxy-D-altrose onto the 19-hydroxy group of sordaricin to give 4'-O-demethylsordarin. The methyltransferase sdnD would complete the biosynthesis of sordarin. Sordarin can be further modified into hypoxysordarin. The unique acyl chain at the 3'-hydroxy group of hypoxysordarin would be constructed by an iterative type I PKS sdnO and the trans-acting polyketide methyltransferase sdnL. SdnL would be responsible for the introduction of an alpha-methyl group of the polyketide chain. Alternatively, the beta-lactamase-like protein sdnR might be responsible for the cleavage and transfer of the polyketide chain from the PKS sdnO to sordarin. Two putative cytochrome P450 monooxygenases, sdnQ and sdnT, might catalyze the epoxidations of the polyketide chain to complete the biosynthesis of hypoxysordarin. Transcriptional regulators sdnM and sdnS are presumably encoded for the transcriptional regulation of the expression of the sdn gene cluster. This Sordaria araneosa (Pleurage araneosa) protein is Cytochrome P450 monooxygenase sdnE.